A 103-amino-acid polypeptide reads, in one-letter code: MYAVIKTGGKQYKVAKGDSVFVEKLEVKPGDEVTFDEVILVNDGKSTKIGTPVVEGAKVVAKVEKQGKEKKVVTFKYKPKKHSHTKYGHRQPYTKVTIESIEA.

Belongs to the bacterial ribosomal protein bL21 family. In terms of assembly, part of the 50S ribosomal subunit. Contacts protein L20.

This protein binds to 23S rRNA in the presence of protein L20. The protein is Large ribosomal subunit protein bL21 of Lactobacillus johnsonii (strain CNCM I-12250 / La1 / NCC 533).